The chain runs to 496 residues: Putative aldehyde dehydrogenase-like protein C922.07c (496 aa).

Residue 241-246 (GSTKVG) coordinates NAD(+). Glutamate 263 acts as the Proton acceptor in catalysis. Cysteine 297 serves as the catalytic Nucleophile.

The protein belongs to the aldehyde dehydrogenase family.

The protein localises to the cytoplasm. The protein resides in the nucleus. This Schizosaccharomyces pombe (strain 972 / ATCC 24843) (Fission yeast) protein is Putative aldehyde dehydrogenase-like protein C922.07c.